Consider the following 95-residue polypeptide: Aspartyl/glutamyl-tRNA(Asn/Gln) amidotransferase subunit C (95 aa).

Belongs to the GatC family. Heterotrimer of A, B and C subunits.

It carries out the reaction L-glutamyl-tRNA(Gln) + L-glutamine + ATP + H2O = L-glutaminyl-tRNA(Gln) + L-glutamate + ADP + phosphate + H(+). The catalysed reaction is L-aspartyl-tRNA(Asn) + L-glutamine + ATP + H2O = L-asparaginyl-tRNA(Asn) + L-glutamate + ADP + phosphate + 2 H(+). In terms of biological role, allows the formation of correctly charged Asn-tRNA(Asn) or Gln-tRNA(Gln) through the transamidation of misacylated Asp-tRNA(Asn) or Glu-tRNA(Gln) in organisms which lack either or both of asparaginyl-tRNA or glutaminyl-tRNA synthetases. The reaction takes place in the presence of glutamine and ATP through an activated phospho-Asp-tRNA(Asn) or phospho-Glu-tRNA(Gln). This Prosthecochloris aestuarii (strain DSM 271 / SK 413) protein is Aspartyl/glutamyl-tRNA(Asn/Gln) amidotransferase subunit C.